A 438-amino-acid polypeptide reads, in one-letter code: Coenzyme A disulfide reductase (438 aa).

FAD is bound at residue 8–33 (GAVAGGATCASQIRRLDKESDIIIFE). Residues Thr15, Gln19, Arg22, Ser39, and Asn42 each contribute to the substrate site. Cys43 serves as the catalytic Nucleophile. The active-site Redox-active is the Cys43. A substrate-binding site is contributed by Lys71. NADP(+) is bound at residue 151-166 (VLVVGAGYVSLEVLEN). 267 to 277 (TNVPNIYVIGD) provides a ligand contact to FAD. A substrate-binding site is contributed by His299. FAD is bound at residue Tyr419. Lys427 provides a ligand contact to substrate.

Belongs to the class-III pyridine nucleotide-disulfide oxidoreductase family. As to quaternary structure, homodimer. Requires FAD as cofactor.

The catalysed reaction is NADP(+) + 2 CoA = CoA-disulfide + NADPH + H(+). Its function is as follows. Catalyzes specifically the NADPH-dependent reduction of coenzyme A disulfide. This Staphylococcus aureus (strain MRSA252) protein is Coenzyme A disulfide reductase.